A 28-amino-acid chain; its full sequence is DCIPGGENCDVFRPYRCCSGYCILLLCA.

3 cysteine pairs are disulfide-bonded: Cys2-Cys18, Cys9-Cys22, and Cys17-Cys27. A 4-hydroxyproline; partial modification is found at Pro4. A 4-carboxyglutamate; partial modification is found at Glu7. Pro14 carries the post-translational modification 4-hydroxyproline; partial.

As to expression, expressed by the venom duct.

It is found in the secreted. Its function is as follows. May inhibit sodium (Nav) or calcium channels (Cav). This chain is Conotoxin de7b, found in Conasprella delessertii (Sozon's cone).